Reading from the N-terminus, the 314-residue chain is 2,3-dihydroxyphenylpropionate/2,3-dihydroxicinnamic acid 1,2-dioxygenase (314 aa).

Residue His115 is the Proton donor of the active site. Residue His179 is the Proton acceptor of the active site.

The protein belongs to the LigB/MhpB extradiol dioxygenase family. Homotetramer. Fe(2+) serves as cofactor.

The enzyme catalyses 3-(2,3-dihydroxyphenyl)propanoate + O2 = (2Z,4E)-2-hydroxy-6-oxonona-2,4-dienedioate + H(+). The catalysed reaction is (2E)-3-(2,3-dihydroxyphenyl)prop-2-enoate + O2 = (2Z,4E,7E)-2-hydroxy-6-oxonona-2,4,7-trienedioate + H(+). Its pathway is aromatic compound metabolism; 3-phenylpropanoate degradation. In terms of biological role, catalyzes the non-heme iron(II)-dependent oxidative cleavage of 2,3-dihydroxyphenylpropionic acid and 2,3-dihydroxicinnamic acid into 2-hydroxy-6-ketononadienedioate and 2-hydroxy-6-ketononatrienedioate, respectively. The sequence is that of 2,3-dihydroxyphenylpropionate/2,3-dihydroxicinnamic acid 1,2-dioxygenase from Klebsiella pneumoniae (strain 342).